A 28-amino-acid chain; its full sequence is Humanin-like 4 (28 aa).

The protein belongs to the humanin family. As to expression, highly expressed in testis. Also expressed in kidney, heart, skeletal muscles and brain.

Its subcellular location is the secreted. The protein resides in the cytoplasm. Functionally, plays a role as a neuroprotective and antiapoptotic factor. This Homo sapiens (Human) protein is Humanin-like 4.